Here is a 484-residue protein sequence, read N- to C-terminus: Putative transporter B0252.3 (484 aa).

11 helical membrane passes run 43 to 63 (ILTC…TGLC), 95 to 115 (STTT…PPLA), 121 to 141 (LPVF…SAFS), 144 to 164 (IMMF…AGLA), 183 to 203 (VYFG…AYIL), 208 to 228 (YLMF…YMTV), 286 to 306 (MFIV…FIYF), 321 to 341 (LNFV…PIFM), 348 to 368 (VLIS…VLSS), 373 to 393 (IHFW…IYMF), and 433 to 453 (LAPA…TLIL).

This sequence belongs to the major facilitator superfamily. Sugar transporter (TC 2.A.1.1) family.

Its subcellular location is the membrane. This Caenorhabditis elegans protein is Putative transporter B0252.3.